Here is a 414-residue protein sequence, read N- to C-terminus: MEVVLEGKFLLDKRTIEGYIGIEDGKISKISLREIKGDHKIKVDKGKVILPGLIDVHVHLRDFEESYKESIESGTKAAVHGGITVVFDMPNTKPPIMDEKTLKLREHLFKRKSYADYALGFLLAGNKPVEADFYKIFMGASTGGIYSKNFEEDYIRALDIVSIHAEDYEIIQKYPERPPIAEIRAIERVIEAVKTHKKPAHICHISTAKGLKLLLDSRLEMLSFEVTPHHLFLTRSDYDKNPLLKVYPPLRSEEDRIALWKNIDKVPVIASDHAPHTLEDKEAGAAGLPGLETEVPLLLDAVNKGLITLQDIVEKMHINPIKIFGIENKGFEKGKDADFTIVDMKREWTIRADNLYTKAGWTPYEGWRVKGKVIMTIIRGEVVMEEDEIIGKPRGERIVKKGKHRRNLGSSEEH.

The Zn(2+) site is built by histidine 57 and histidine 59. Substrate-binding positions include 59-61 and asparagine 91; that span reads HLR. 4 residues coordinate Zn(2+): lysine 135, histidine 164, histidine 204, and aspartate 272. Lysine 135 is modified (N6-carboxylysine). The active site involves aspartate 272. Substrate-binding positions include histidine 276 and 286–287; that span reads AG.

Belongs to the metallo-dependent hydrolases superfamily. DHOase family. Class I DHOase subfamily. It depends on Zn(2+) as a cofactor.

It catalyses the reaction (S)-dihydroorotate + H2O = N-carbamoyl-L-aspartate + H(+). It participates in pyrimidine metabolism; UMP biosynthesis via de novo pathway; (S)-dihydroorotate from bicarbonate: step 3/3. Functionally, catalyzes the reversible cyclization of carbamoyl aspartate to dihydroorotate. This chain is Dihydroorotase, found in Pyrococcus furiosus (strain ATCC 43587 / DSM 3638 / JCM 8422 / Vc1).